The primary structure comprises 446 residues: Oxysterols receptor LXR-beta (446 aa).

The segment at 1–69 (MSSPTSSLDT…PERKRKKGPA (69 aa)) is disordered. The transactivation AF-1; required for ligand-independent transactivation function stretch occupies residues 1 to 76 (MSSPTSSLDT…GPAPKMLGHE (76 aa)). The segment covering 17–28 (SPQPSTSATSPT) has biased composition (low complexity). Residues 75–152 (HELCRVCGDK…AGMREQCVLS (78 aa)) constitute a DNA-binding region (nuclear receptor). 2 consecutive NR C4-type zinc fingers follow at residues 78–98 (CRVC…CEGC) and 116–140 (CRGS…LRKC). The disordered stretch occupies residues 159-201 (KRIQKQQQQQPPPPSEPAASSSGRPAASPGTSEASSQGSGEGE). A compositionally biased stretch (low complexity) spans 175-196 (PAASSSGRPAASPGTSEASSQG). The segment at 205–446 (LTAAQELMIQ…LLSEIWDVHE (242 aa)) is transactivation AF-2; required for ligand-dependent transactivation function; mediates interaction with CCAR2. The NR LBD domain occupies 208-446 (AQELMIQQLV…LLSEIWDVHE (239 aa)). Residues K395 and K433 each participate in a glycyl lysine isopeptide (Lys-Gly) (interchain with G-Cter in SUMO2) cross-link.

The protein belongs to the nuclear hormone receptor family. NR1 subfamily. As to quaternary structure, forms a heterodimer with RXR. Interacts with CCAR2 (via N-terminus) in a ligand-independent manner. Interacts (when sumoylated) with GPS2; interaction with GPS2 onto hepatic acute phase protein promoters prevents N-Cor corepressor complex dissociation. Interacts with ABCA12 and ABCA1; this interaction is required for ABCA1 localization to the cell surface and is necessary for its normal activity and stability. Post-translationally, sumoylated by SUMO2 at Lys-395 and Lys-433 during the hepatic acute phase response, leading to promote interaction with GPS2 and prevent N-Cor corepressor complex dissociation. Ubiquitous.

Its subcellular location is the nucleus. Nuclear receptor that exhibits a ligand-dependent transcriptional activation activity. Binds preferentially to double-stranded oligonucleotide direct repeats having the consensus half-site sequence 5'-AGGTCA-3' and 4-nt spacing (DR-4). Regulates cholesterol uptake through MYLIP-dependent ubiquitination of LDLR, VLDLR and LRP8; DLDLR and LRP8. Interplays functionally with RORA for the regulation of genes involved in liver metabolism. Induces LPCAT3-dependent phospholipid remodeling in endoplasmic reticulum (ER) membranes of hepatocytes, driving SREBF1 processing and lipogenesis. Via LPCAT3, triggers the incorporation of arachidonate into phosphatidylcholines of ER membranes, increasing membrane dynamics and enabling triacylglycerols transfer to nascent very low-density lipoprotein (VLDL) particles. Via LPCAT3 also counteracts lipid-induced ER stress response and inflammation, likely by modulating SRC kinase membrane compartmentalization and limiting the synthesis of lipid inflammatory mediators. Plays an anti-inflammatory role during the hepatic acute phase response by acting as a corepressor: inhibits the hepatic acute phase response by preventing dissociation of the N-Cor corepressor complex. The sequence is that of Oxysterols receptor LXR-beta (Nr1h2) from Mus musculus (Mouse).